Here is a 153-residue protein sequence, read N- to C-terminus: UPF0260 protein Plav_0898 (153 aa).

Belongs to the UPF0260 family.

The protein is UPF0260 protein Plav_0898 of Parvibaculum lavamentivorans (strain DS-1 / DSM 13023 / NCIMB 13966).